We begin with the raw amino-acid sequence, 184 residues long: UPS-like protein C36.10 (184 aa).

The region spanning 1–172 is the PRELI/MSF1 domain; it reads MKIFESCHLF…VLEKINMSVF (172 aa).

It belongs to the slowmo family.

The protein localises to the cytoplasm. It localises to the mitochondrion inner membrane. Its subcellular location is the mitochondrion intermembrane space. Functionally, required for mitochondrial morphology. May control phospholipid metabolism in the mitochondrial intermembrane space. The sequence is that of UPS-like protein C36.10 from Schizosaccharomyces pombe (strain 972 / ATCC 24843) (Fission yeast).